The following is a 71-amino-acid chain: Small ribosomal subunit protein bS21 (71 aa).

Basic residues predominate over residues 49-59 (AAAAVKRHAKK). A disordered region spans residues 49-71 (AAAAVKRHAKKVQREQRRSVRLY). A compositionally biased stretch (basic and acidic residues) spans 60 to 71 (VQREQRRSVRLY).

This sequence belongs to the bacterial ribosomal protein bS21 family.

The protein is Small ribosomal subunit protein bS21 of Stutzerimonas stutzeri (strain A1501) (Pseudomonas stutzeri).